A 259-amino-acid chain; its full sequence is DNA-directed RNA polymerase subunit Rpo3 (259 aa).

It belongs to the archaeal Rpo3/eukaryotic RPB3 RNA polymerase subunit family. Part of the RNA polymerase complex.

Its subcellular location is the cytoplasm. It carries out the reaction RNA(n) + a ribonucleoside 5'-triphosphate = RNA(n+1) + diphosphate. DNA-dependent RNA polymerase (RNAP) catalyzes the transcription of DNA into RNA using the four ribonucleoside triphosphates as substrates. The protein is DNA-directed RNA polymerase subunit Rpo3 of Pyrococcus horikoshii (strain ATCC 700860 / DSM 12428 / JCM 9974 / NBRC 100139 / OT-3).